A 457-amino-acid chain; its full sequence is MYSFNTLRLYLWETIVFFSLAASKEAEAARSASKPMSPSDFLDKLMGRTSGYDARIRPNFKGPPVNVSCNIFINSFGSIAETTMDYRVNIFLRQQWNDPRLAYNEYPDDSLDLDPSMLDSIWKPDLFFANEKGAHFHEITTDNKLLRISRNGNVLYSIRITLTLACPMDLKNFPMDVQTCIMQLESFGYTMNDLIFEWQEQGAVQVADGLTLPQFILKEEKDLRYCTKHYNTGKFTCIEARFHLERQMGYYLIQMYIPSLLIVILSWISFWINMDAAPARVGLGITTVLTMTTQSSGSRASLPKVSYVKAIDIWMAVCLLFVFSALLEYAAVNFVSRQHKELLRFRRKRRHHKSPMLNLFQEDEAGEGRFNFSAYGMGPACLQAKDGISVKGANNSNTTNPPPAPSKSPEEMRKLFIQRAKKIDKISRIGFPMAFLIFNMFYWIIYKIVRREDVHNQ.

Residues 1–28 (MYSFNTLRLYLWETIVFFSLAASKEAEA) form the signal peptide. Residues 29–250 (ARSASKPMSP…RFHLERQMGY (222 aa)) are Extracellular-facing. A glycan (N-linked (GlcNAc...) asparagine) is linked at N66. Glycine-binding residues include R93 and S157. C166 and C180 are oxidised to a cystine. Zn(2+)-binding residues include E220 and D222. A disulfide bridge links C226 with C237. 230-235 (YNTGKF) provides a ligand contact to strychnine. T232 provides a ligand contact to glycine. Residue H243 participates in Zn(2+) binding. A helical transmembrane segment spans residues 251–272 (YLIQMYIPSLLIVILSWISFWI). Over 273 to 277 (NMDAA) the chain is Cytoplasmic. The helical transmembrane segment at 278–298 (PARVGLGITTVLTMTTQSSGS) threads the bilayer. Over 299–309 (RASLPKVSYVK) the chain is Extracellular. Residues 310 to 330 (AIDIWMAVCLLFVFSALLEYA) traverse the membrane as a helical segment. Residues 331-425 (AVNFVSRQHK…FIQRAKKIDK (95 aa)) are Cytoplasmic-facing. The segment at 391-410 (KGANNSNTTNPPPAPSKSPE) is disordered. A helical transmembrane segment spans residues 426–446 (ISRIGFPMAFLIFNMFYWIIY). The Extracellular segment spans residues 447-457 (KIVRREDVHNQ).

Belongs to the ligand-gated ion channel (TC 1.A.9) family. Glycine receptor (TC 1.A.9.3) subfamily. GLRA1 sub-subfamily. Interacts with GLRB to form heteropentameric channels; this is probably the predominant form in vivo. Heteropentamer composed of four GLRA1 subunits and one GLRB subunit. Heteropentamer composed of two GLRA1 and three GLRB. Heteropentamer composed of three GLRA1 and two GLRB. Homopentamer (in vitro). Both homopentamers and heteropentamers form functional ion channels, but their characteristics are subtly different. Detected on spinal cord neurons (at protein level). Detected in spinal cord.

It is found in the postsynaptic cell membrane. It localises to the synapse. Its subcellular location is the perikaryon. The protein localises to the cell projection. The protein resides in the dendrite. It is found in the cell membrane. It carries out the reaction chloride(in) = chloride(out). Its activity is regulated as follows. Channel opening is triggered by extracellular glycine. Channel characteristics depend on the subunit composition; heteropentameric channels are activated by lower glycine levels and display faster desensitization. Subunit of heteromeric glycine-gated chloride channels. Plays an important role in the down-regulation of neuronal excitability. Contributes to the generation of inhibitory postsynaptic currents. Channel activity is potentiated by ethanol. Potentiation of channel activity by intoxicating levels of ethanol contribute to the sedative effects of ethanol. This Bos taurus (Bovine) protein is Glycine receptor subunit alpha-1 (GLRA1).